The following is a 94-amino-acid chain: Protein RESPONSE TO LOW SULFUR 2 (94 aa).

Residues 15-63 (VDELRRKNGEMEKAVEEMKKEMLQLWRRTQVAEEAEERLCSQLAELEAE) adopt a coiled-coil conformation.

May be involved in defense responses monitoring. Probably implicated into osmotic stress signaling. This Arabidopsis thaliana (Mouse-ear cress) protein is Protein RESPONSE TO LOW SULFUR 2.